Consider the following 283-residue polypeptide: Bifunctional protein FolD (283 aa).

Residues 165–167 (GAS) and Ser-190 contribute to the NADP(+) site.

It belongs to the tetrahydrofolate dehydrogenase/cyclohydrolase family. In terms of assembly, homodimer.

It carries out the reaction (6R)-5,10-methylene-5,6,7,8-tetrahydrofolate + NADP(+) = (6R)-5,10-methenyltetrahydrofolate + NADPH. The catalysed reaction is (6R)-5,10-methenyltetrahydrofolate + H2O = (6R)-10-formyltetrahydrofolate + H(+). Its pathway is one-carbon metabolism; tetrahydrofolate interconversion. In terms of biological role, catalyzes the oxidation of 5,10-methylenetetrahydrofolate to 5,10-methenyltetrahydrofolate and then the hydrolysis of 5,10-methenyltetrahydrofolate to 10-formyltetrahydrofolate. The protein is Bifunctional protein FolD of Cupriavidus necator (strain ATCC 17699 / DSM 428 / KCTC 22496 / NCIMB 10442 / H16 / Stanier 337) (Ralstonia eutropha).